Reading from the N-terminus, the 298-residue chain is (DL)-glycerol-3-phosphatase 1, mitochondrial (298 aa).

The transit peptide at 1 to 46 directs the protein to the mitochondrion; the sequence is MLTTPTRFVALRIPFRSSNKIPISIAPSPKVFPRKPVIRVPASLRF. The active-site Nucleophile is the D77. D77, D79, and D242 together coordinate Mg(2+). D79 serves as the catalytic Proton donor.

It belongs to the HAD-like hydrolase superfamily. DOG/GPP family. Requires Mg(2+) as cofactor. Ubiquitous with highest expression in siliques. Mainly restricted to the meristem of immature flower and vascular elements of the root, shoot, leave, siliqua and developing embryo (at the protein level).

The protein resides in the mitochondrion. The catalysed reaction is sn-glycerol 1-phosphate + H2O = glycerol + phosphate. It carries out the reaction sn-glycerol 3-phosphate + H2O = glycerol + phosphate. The enzyme catalyses 5-amino-6-(5-phospho-D-ribitylamino)uracil + H2O = 5-amino-6-(D-ribitylamino)uracil + phosphate. In terms of biological role, acts as a glycerol-3-phosphatase with higher stereospecificity for L-glycerol-3-phosphate than DL-glycerol-3-phosphate. Can also dephosphorylate in vitro 5-amino-6-(5-phospho-D-ribitylamino)uracil, also known as ARPP. The sequence is that of (DL)-glycerol-3-phosphatase 1, mitochondrial from Arabidopsis thaliana (Mouse-ear cress).